The sequence spans 1541 residues: WD repeat-containing protein 62 (1541 aa).

N-acetylalanine is present on A2. S33 bears the Phosphoserine mark. Phosphothreonine is present on T46. WD repeat units lie at residues T109–E150, G153–S194, K196–V234, I291–N330, A357–K396, F402–W450, D490–R529, A532–Q574, D578–H618, A626–C665, G671–G713, and H714–M752. S501 carries the post-translational modification Phosphoserine. 2 disordered regions span residues R762–L820 and L911–T1050. Basic and acidic residues predominate over residues K770–Q780. A compositionally biased stretch (polar residues) spans E781–G795. Over residues Q797–E809 the composition is skewed to acidic residues. Residues E803–V846 form a WD 13 repeat. Basic and acidic residues predominate over residues E810 to L820. Residues V937 to V948 are compositionally biased toward low complexity. A Phosphoserine modification is found at S943. The segment covering P1008–G1026 has biased composition (pro residues). At T1050 the chain carries Phosphothreonine. Residues S1095, S1125, and S1151 each carry the phosphoserine modification. Disordered stretches follow at residues L1133–G1153 and S1185–H1212. The WD 14 repeat unit spans residues P1138–L1180. Residues D1193–L1202 show a composition bias toward pro residues. S1235, S1255, and S1256 each carry phosphoserine. Positions T1273–H1293 are disordered. T1275 carries the phosphothreonine modification.

In terms of assembly, can form homodimers (via C-terminus). Interacts (via C-terminus) with MAPKBP1 (via C-terminus). Interacts with CDK5RAP2, CEP152, CEP63 and KIAA0753. CEP63, CDK5RAP2, CEP152, WDR62 are proposed to form a stepwise assembled complex at the centrosome forming a ring near parental centrioles.

The protein resides in the nucleus. It localises to the cytoplasm. It is found in the cytoskeleton. The protein localises to the spindle pole. Its subcellular location is the microtubule organizing center. The protein resides in the centrosome. It localises to the centriole. Functionally, required for cerebral cortical development. Plays a role in neuronal proliferation and migration. Plays a role in mother-centriole-dependent centriole duplication; the function seems also to involve CEP152, CDK5RAP2 and CEP63 through a stepwise assembled complex at the centrosome that recruits CDK2 required for centriole duplication. This chain is WD repeat-containing protein 62 (WDR62), found in Sus scrofa (Pig).